A 210-amino-acid polypeptide reads, in one-letter code: Orotate phosphoribosyltransferase (210 aa).

5-phospho-alpha-D-ribose 1-diphosphate contacts are provided by residues arginine 94, lysine 98, histidine 100, and 120–128; that span reads EDLISTGGS. An orotate-binding site is contributed by serine 124.

It belongs to the purine/pyrimidine phosphoribosyltransferase family. PyrE subfamily. As to quaternary structure, homodimer. Mg(2+) is required as a cofactor.

It catalyses the reaction orotidine 5'-phosphate + diphosphate = orotate + 5-phospho-alpha-D-ribose 1-diphosphate. It participates in pyrimidine metabolism; UMP biosynthesis via de novo pathway; UMP from orotate: step 1/2. In terms of biological role, catalyzes the transfer of a ribosyl phosphate group from 5-phosphoribose 1-diphosphate to orotate, leading to the formation of orotidine monophosphate (OMP). The protein is Orotate phosphoribosyltransferase of Bacillus cytotoxicus (strain DSM 22905 / CIP 110041 / 391-98 / NVH 391-98).